Here is a 560-residue protein sequence, read N- to C-terminus: Arginine--tRNA ligase (560 aa).

A 'HIGH' region motif is present at residues 135 to 145 (ANPTGLLHMGN).

Belongs to the class-I aminoacyl-tRNA synthetase family. Monomer.

The protein localises to the cytoplasm. It carries out the reaction tRNA(Arg) + L-arginine + ATP = L-arginyl-tRNA(Arg) + AMP + diphosphate. This chain is Arginine--tRNA ligase, found in Moorella thermoacetica (strain ATCC 39073 / JCM 9320).